The primary structure comprises 485 residues: Signal recognition particle protein (485 aa).

GTP-binding positions include 107–114, 189–193, and 247–250; these read GLQGAGKT, DTAGR, and TKLD. The disordered stretch occupies residues 452–485; the sequence is GFGGGAPAPQPGFRGYGPPKKQKKGSKKKKGFGL. Basic residues predominate over residues 471–485; the sequence is KKQKKGSKKKKGFGL.

This sequence belongs to the GTP-binding SRP family. SRP54 subfamily. Part of the signal recognition particle protein translocation system, which is composed of SRP and FtsY.

It is found in the cytoplasm. It carries out the reaction GTP + H2O = GDP + phosphate + H(+). Its function is as follows. Involved in targeting and insertion of nascent membrane proteins into the cytoplasmic membrane. Binds to the hydrophobic signal sequence of the ribosome-nascent chain (RNC) as it emerges from the ribosomes. The SRP-RNC complex is then targeted to the cytoplasmic membrane where it interacts with the SRP receptor FtsY. In Synechococcus elongatus (strain ATCC 33912 / PCC 7942 / FACHB-805) (Anacystis nidulans R2), this protein is Signal recognition particle protein.